A 349-amino-acid polypeptide reads, in one-letter code: uncharacterized protein (349 aa).

Serine 2 carries the phosphoserine modification.

This is an uncharacterized protein from Saccharomyces cerevisiae (strain ATCC 204508 / S288c) (Baker's yeast).